Consider the following 410-residue polypeptide: Multidrug resistance protein MdtA (410 aa).

The N-terminal stretch at 1-21 (MNNRYPVMKKGLIVLVVIAVA) is a signal peptide. The disordered stretch occupies residues 36–56 (SDGDLSGQSAHGKRGNGAHKP).

The protein belongs to the membrane fusion protein (MFP) (TC 8.A.1) family. Part of a tripartite efflux system composed of MdtA, MdtB and MdtC.

The protein resides in the cell inner membrane. The chain is Multidrug resistance protein MdtA from Pantoea ananatis (strain AJ13355).